Consider the following 413-residue polypeptide: Multifunctional CCA protein (413 aa).

ATP contacts are provided by Gly-8 and Arg-11. CTP is bound by residues Gly-8 and Arg-11. Mg(2+)-binding residues include Asp-21 and Asp-23. Residues Arg-91, Arg-143, and Arg-146 each coordinate ATP. Residues Arg-91, Arg-143, and Arg-146 each contribute to the CTP site. Residues 232-333 form the HD domain; sequence TGVHVMMVVD…VRLFERSDAL (102 aa).

This sequence belongs to the tRNA nucleotidyltransferase/poly(A) polymerase family. Bacterial CCA-adding enzyme type 1 subfamily. Monomer. Can also form homodimers and oligomers. Requires Mg(2+) as cofactor. It depends on Ni(2+) as a cofactor.

The enzyme catalyses a tRNA precursor + 2 CTP + ATP = a tRNA with a 3' CCA end + 3 diphosphate. It carries out the reaction a tRNA with a 3' CCA end + 2 CTP + ATP = a tRNA with a 3' CCACCA end + 3 diphosphate. Functionally, catalyzes the addition and repair of the essential 3'-terminal CCA sequence in tRNAs without using a nucleic acid template. Adds these three nucleotides in the order of C, C, and A to the tRNA nucleotide-73, using CTP and ATP as substrates and producing inorganic pyrophosphate. tRNA 3'-terminal CCA addition is required both for tRNA processing and repair. Also involved in tRNA surveillance by mediating tandem CCA addition to generate a CCACCA at the 3' terminus of unstable tRNAs. While stable tRNAs receive only 3'-terminal CCA, unstable tRNAs are marked with CCACCA and rapidly degraded. In Burkholderia lata (strain ATCC 17760 / DSM 23089 / LMG 22485 / NCIMB 9086 / R18194 / 383), this protein is Multifunctional CCA protein.